Here is a 127-residue protein sequence, read N- to C-terminus: Large ribosomal subunit protein uL18 (127 aa).

This sequence belongs to the universal ribosomal protein uL18 family. In terms of assembly, part of the 50S ribosomal subunit; part of the 5S rRNA/L5/L18/L25 subcomplex. Contacts the 5S and 23S rRNAs.

In terms of biological role, this is one of the proteins that bind and probably mediate the attachment of the 5S RNA into the large ribosomal subunit, where it forms part of the central protuberance. This Streptomyces griseus subsp. griseus (strain JCM 4626 / CBS 651.72 / NBRC 13350 / KCC S-0626 / ISP 5235) protein is Large ribosomal subunit protein uL18.